The sequence spans 458 residues: UDP-N-acetylmuramate--L-alanine ligase (458 aa).

118 to 124 (GTHGKTT) lines the ATP pocket.

It belongs to the MurCDEF family.

Its subcellular location is the cytoplasm. The catalysed reaction is UDP-N-acetyl-alpha-D-muramate + L-alanine + ATP = UDP-N-acetyl-alpha-D-muramoyl-L-alanine + ADP + phosphate + H(+). Its pathway is cell wall biogenesis; peptidoglycan biosynthesis. Functionally, cell wall formation. This chain is UDP-N-acetylmuramate--L-alanine ligase, found in Clostridium novyi (strain NT).